The sequence spans 500 residues: Maturase K (500 aa).

The protein belongs to the intron maturase 2 family. MatK subfamily.

Its subcellular location is the plastid. The protein resides in the chloroplast. Usually encoded in the trnK tRNA gene intron. Probably assists in splicing its own and other chloroplast group II introns. This is Maturase K from Proboscidea louisianica (Louisiana Devil's-claw).